A 435-amino-acid chain; its full sequence is T-cell defective protein 2 (435 aa).

A disordered region spans residues Asn-65–Ile-146. Residues Thr-322–Ile-352 are a coiled coil. The tract at residues Phe-393 to Thr-419 is disordered.

As to expression, strongly expressed in the cytoplasm of the pharynx muscle cells and several head neurons, probably the IL1s or IL2s, throughout development. Also expressed in some other unidentified neurons in the tail region. Weakly expressed in the nuclei of the T-cells and the T-cell daughters. Not expressed in gonads and in P12 cell.

Its subcellular location is the nucleus. The protein localises to the cytoplasm. Functionally, may act synergistically with the Wnt pathways to control T-cell fate specification, gonad development, and P12 cell fate specification. Required for the distribution of pop-1 and tlp-1 proteins. This chain is T-cell defective protein 2 (tcl-2), found in Caenorhabditis elegans.